We begin with the raw amino-acid sequence, 242 residues long: Protein unc-119 homolog B-A (242 aa).

Over residues 1-20 (MSGSKREAALTGQPKDERKK) the composition is skewed to basic and acidic residues. The tract at residues 1-49 (MSGSKREAALTGQPKDERKKSGGGVINRLKARRVQGKESGTSDQSSVTP) is disordered. A compositionally biased stretch (polar residues) spans 38 to 48 (ESGTSDQSSVT). Tyr133 contacts tetradecanoate.

The protein belongs to the PDE6D/unc-119 family.

In terms of biological role, myristoyl-binding protein that acts as a cargo adapter: specifically binds the myristoyl moiety of a subset of N-terminally myristoylated proteins and is required for their localization. Plays a key role in localization of proteins to the primary cilium membrane. This Xenopus laevis (African clawed frog) protein is Protein unc-119 homolog B-A (unc119b-a).